A 578-amino-acid polypeptide reads, in one-letter code: Zinc finger protein with KRAB and SCAN domains 8 (578 aa).

The interval 1–20 (MAEESRKPSAPSPPDQTPEE) is disordered. The residue at position 12 (Ser-12) is a Phosphoserine. A Glycyl lysine isopeptide (Lys-Gly) (interchain with G-Cter in SUMO2) cross-link involves residue Lys-26. Positions 51–133 (RLRFRQLCYQ…TLLEDLERQI (83 aa)) constitute an SCAN box domain. Residues 158–205 (ASAPEPPNTQLQSEATQHKSPVPQESQERAMSTSQSPTRSQKGSSGDQ) are disordered. Over residues 165-205 (NTQLQSEATQHKSPVPQESQERAMSTSQSPTRSQKGSSGDQ) the composition is skewed to polar residues. Residues Lys-176 and Lys-199 each participate in a glycyl lysine isopeptide (Lys-Gly) (interchain with G-Cter in SUMO2) cross-link. At Ser-201 the chain carries Phosphoserine. The 97-residue stretch at 220 to 316 (EKIEDMAVSL…GRLERQRGNP (97 aa)) folds into the KRAB domain. Glycyl lysine isopeptide (Lys-Gly) (interchain with G-Cter in SUMO2) cross-links involve residues Lys-221, Lys-272, and Lys-288. 2 C2H2-type zinc fingers span residues 322–344 (HKCDECGKSFAQSSGLVRHWRIH) and 350–372 (YQCNVCGKAFSYRSALLSHQDIH). Residues Lys-374 and Lys-376 each participate in a glycyl lysine isopeptide (Lys-Gly) (interchain with G-Cter in SUMO2) cross-link. 7 C2H2-type zinc fingers span residues 378-400 (YHCKECGKAFSQNTGLILHQRIH), 406-428 (YQCNQCGKAFSQSAGLILHQRIH), 434-456 (YECNECGKAFSHSSHLIGHQRIH), 462-484 (YECDECGKTFRRSSHLIGHQRSH), 490-512 (YKCNECGRAFSQKSGLIEHQRIH), 518-540 (YKCKECGKAFNGNTGLIQHLRIH), and 546-568 (YQCNECGKAFIQRSSLIRHQRIH). Glycyl lysine isopeptide (Lys-Gly) (interchain with G-Cter in SUMO2) cross-links involve residues Lys-413 and Lys-441. Residue Lys-502 forms a Glycyl lysine isopeptide (Lys-Gly) (interchain with G-Cter in SUMO2) linkage. Lys-572 is covalently cross-linked (Glycyl lysine isopeptide (Lys-Gly) (interchain with G-Cter in SUMO2)).

It belongs to the krueppel C2H2-type zinc-finger protein family.

It is found in the nucleus. Its function is as follows. May be involved in transcriptional regulation. The chain is Zinc finger protein with KRAB and SCAN domains 8 (ZKSCAN8) from Pan troglodytes (Chimpanzee).